Consider the following 403-residue polypeptide: Zinc finger HIT domain-containing protein 2 (403 aa).

Met-1 carries the post-translational modification N-acetylmethionine. Zn(2+) contacts are provided by Cys-7, Cys-10, Cys-22, Cys-25, Cys-30, Cys-34, His-38, and Cys-41. The HIT-type zinc finger occupies 7 to 41 (CGFCPAGEVQPARYTCPRCNAPYCSLRCYRTHGTC). A disordered region spans residues 72 to 98 (RQQRETEDEPGEAGLSSGPAPGGLSGL). The residue at position 161 (Thr-161) is a Phosphothreonine.

Interacts (via HIT-type zinc finger) with RUVBL2 in the presence of ATP or ADP; shows a stronger interaction in the presence of ADP. In terms of tissue distribution, low expression in most tissues; highly expressed in testis.

Its function is as follows. May act as a bridging factor mediating the interaction between the R2TP/Prefoldin-like (R2TP/PFDL) complex and U5 small nuclear ribonucleoprotein (U5 snRNP). Required for the interaction of R2TP complex subunit RPAP3 and prefoldin-like subunit URI1 with U5 snRNP proteins EFTUD2 and PRPF8. May play a role in regulating the composition of the U5 snRNP complex. This chain is Zinc finger HIT domain-containing protein 2 (ZNHIT2), found in Homo sapiens (Human).